The sequence spans 236 residues: UPF0502 protein Bcep1808_3727 (236 aa).

The protein belongs to the UPF0502 family.

In Burkholderia vietnamiensis (strain G4 / LMG 22486) (Burkholderia cepacia (strain R1808)), this protein is UPF0502 protein Bcep1808_3727.